A 170-amino-acid polypeptide reads, in one-letter code: MTQPLDDAASAIFGPRLELAQCYADWLGTAGVERGLLGPREVDRLWERHVLNSAVIGELLDHGERVVDIGSGAGLPALPLAIARHDLQVVLLEPMLRRVEFLQEVVTDLGLAVEVVRGRAEERSVRERLGGSDAAVSRAVAALDKLAKWSMPLLKREGRMLAIKRGASSR.

S-adenosyl-L-methionine contacts are provided by residues Gly-70, Leu-75, 120–121 (AE), and Arg-138.

It belongs to the methyltransferase superfamily. RNA methyltransferase RsmG family.

Its subcellular location is the cytoplasm. Its function is as follows. Specifically methylates the N7 position of guanine in position 518 of 16S rRNA. In Mycobacterium ulcerans (strain Agy99), this protein is Ribosomal RNA small subunit methyltransferase G.